The sequence spans 57 residues: Large ribosomal subunit protein bL32c (57 aa).

The protein belongs to the bacterial ribosomal protein bL32 family.

Its subcellular location is the plastid. It is found in the chloroplast. The polypeptide is Large ribosomal subunit protein bL32c (Acorus calamus (Sweet flag)).